The chain runs to 361 residues: Phospho-N-acetylmuramoyl-pentapeptide-transferase (361 aa).

A run of 10 helical transmembrane segments spans residues 25 to 45 (TGGA…WIIN), 72 to 92 (TPTM…VLWA), 95 to 115 (VNPY…VGFY), 133 to 153 (TRLL…VWLG), 169 to 189 (VVLN…VGAG), 200 to 220 (GLAI…AYLA), 240 to 260 (LAVL…FNAP), 264 to 284 (IFMG…IAVA), 289 to 309 (IVLA…IVQV), and 338 to 358 (QIVI…LATL).

It belongs to the glycosyltransferase 4 family. MraY subfamily. The cofactor is Mg(2+).

The protein resides in the cell inner membrane. It catalyses the reaction UDP-N-acetyl-alpha-D-muramoyl-L-alanyl-gamma-D-glutamyl-meso-2,6-diaminopimeloyl-D-alanyl-D-alanine + di-trans,octa-cis-undecaprenyl phosphate = di-trans,octa-cis-undecaprenyl diphospho-N-acetyl-alpha-D-muramoyl-L-alanyl-D-glutamyl-meso-2,6-diaminopimeloyl-D-alanyl-D-alanine + UMP. Its pathway is cell wall biogenesis; peptidoglycan biosynthesis. In terms of biological role, catalyzes the initial step of the lipid cycle reactions in the biosynthesis of the cell wall peptidoglycan: transfers peptidoglycan precursor phospho-MurNAc-pentapeptide from UDP-MurNAc-pentapeptide onto the lipid carrier undecaprenyl phosphate, yielding undecaprenyl-pyrophosphoryl-MurNAc-pentapeptide, known as lipid I. This Rhodopseudomonas palustris (strain BisB5) protein is Phospho-N-acetylmuramoyl-pentapeptide-transferase.